The chain runs to 700 residues: Myb-related protein B (700 aa).

HTH myb-type domains lie at 26–77 (RDSK…LRVL), 78–133 (NPDL…NPEV), and 134–184 (KKSC…KRKV). The H-T-H motif DNA-binding region spans 54–77 (WKFLASHFPNRTDQQCQYRWLRVL). Lys104 is covalently cross-linked (Glycyl lysine isopeptide (Lys-Gly) (interchain with G-Cter in SUMO2)). 2 DNA-binding regions (H-T-H motif) span residues 106–129 (WTLI…HNHL) and 157–180 (WAEI…NSTI). Glycyl lysine isopeptide (Lys-Gly) (interchain with G-Cter in SUMO2) cross-links involve residues Lys194 and Lys197. Disordered regions lie at residues 212–287 (LQSA…PETS) and 391–412 (PISP…VLKR). A compositionally biased stretch (polar residues) spans 213–229 (QSAQPTEGQGSLLTNWP). The residue at position 241 (Ser241) is a Phosphoserine. The residue at position 266 (Thr266) is a Phosphothreonine. Lys275 participates in a covalent cross-link: Glycyl lysine isopeptide (Lys-Gly) (interchain with G-Cter in SUMO2). Ser282 and Ser393 each carry phosphoserine. Lys411 participates in a covalent cross-link: Glycyl lysine isopeptide (Lys-Gly) (interchain with G-Cter in SUMO2). The Nuclear localization signal signature appears at 411–417 (KRQRKRR). Residues Thr440 and Thr444 each carry the phosphothreonine; by CDK2 modification. Glycyl lysine isopeptide (Lys-Gly) (interchain with G-Cter in SUMO2) cross-links involve residues Lys447 and Lys482. A phosphothreonine; by CDK2 mark is found at Thr487 and Thr494. A Glycyl lysine isopeptide (Lys-Gly) (interchain with G-Cter in SUMO2) cross-link involves residue Lys499. The residue at position 505 (Thr505) is a Phosphothreonine. Lys509 is covalently cross-linked (Glycyl lysine isopeptide (Lys-Gly) (interchain with G-Cter in SUMO2)). Thr520 is modified (phosphothreonine; by CDK2). Residues Lys523, Lys533, and Lys546 each participate in a glycyl lysine isopeptide (Lys-Gly) (interchain with G-Cter in SUMO2) cross-link. Positions 564–584 (RPEKQKRKPGLRRSPIKKVRK) match the Bipartite nuclear localization signal motif. Ser577 is subject to Phosphoserine; by CDK2. Glycyl lysine isopeptide (Lys-Gly) (interchain with G-Cter in SUMO2) cross-links involve residues Lys584, Lys596, Lys625, Lys639, and Lys648.

In terms of assembly, component of the DREAM complex (also named LINC complex) at least composed of E2F4, E2F5, LIN9, LIN37, LIN52, LIN54, MYBL1, MYBL2, RBL1, RBL2, RBBP4, TFDP1 and TFDP2. The complex exists in quiescent cells where it represses cell cycle-dependent genes. It dissociates in S phase when LIN9, LIN37, LIN52 and LIN54 form a subcomplex that binds to MYBL22. Interacts with CCNF (via the Cyclin N-terminal domain). Phosphorylated by cyclin A/CDK2 during S-phase. Phosphorylation at Thr-520 is probably involved in transcriptional activity.

It localises to the nucleus. In terms of biological role, transcription factor involved in the regulation of cell survival, proliferation, and differentiation. Transactivates the expression of the CLU gene. This chain is Myb-related protein B (MYBL2), found in Homo sapiens (Human).